Consider the following 166-residue polypeptide: Endoribonuclease YbeY (166 aa).

Zn(2+) is bound by residues His136, His140, and His146.

It belongs to the endoribonuclease YbeY family. Requires Zn(2+) as cofactor.

It is found in the cytoplasm. Single strand-specific metallo-endoribonuclease involved in late-stage 70S ribosome quality control and in maturation of the 3' terminus of the 16S rRNA. The chain is Endoribonuclease YbeY from Synechococcus sp. (strain CC9605).